The sequence spans 430 residues: Alpha-humulene synthase asR6 (430 aa).

Belongs to the terpene synthase family. Alpha-humulene synthase eupE subfamily. Mg(2+) serves as cofactor.

It catalyses the reaction (2E,6E)-farnesyl diphosphate = alpha-humulene + diphosphate. The protein operates within secondary metabolite biosynthesis; terpenoid biosynthesis. Alpha-humulene synthase; part of the gene cluster that mediates the biosynthesis of xenovulene A, an unusual meroterpenoid that has potent inhibitory effects on the human gamma-aminobutyrate A (GABAA) benzodiazepine receptor. The first step of xenovulene A biosynthesis is the biosynthesis of 3-methylorcinaldehyde performed by the non-reducing polyketide synthase aspks1. The salicylate hydroxylase asL1 then catalyzes the oxidative dearomatization of 3-methylorcinaldehyde to yield a dearomatized hydroxycyclohexadione. The 2-oxoglutarate-dependent dioxygenase asL3 further catalyzes the oxidative ring expansion to provide the first tropolone metabolite. The cytochrome P450 monooxygenase asR2 allows the synthesis of tropolone hemiacetal. In parallel, a previously unrecognised class of terpene cyclase, asR6, produces alpha-humulene from farnesylpyrophosphate (FPP). The putative Diels-Alderase asR5 probably catalyzes the formation of the tropolone-humulene skeleton by linking humulene and the polyketide moiety. Oxidative-ring contractions catalyzed by asL4 and asL6 then processively remove carbon atoms from the polyketide to yield xenovulene A. The polypeptide is Alpha-humulene synthase asR6 (Sarocladium schorii (Acremonium strictum (strain IMI 501407))).